Consider the following 178-residue polypeptide: Oligoribonuclease (178 aa).

The Exonuclease domain maps to 7–168 (LIWIDLEMTG…DDIRESIAEL (162 aa)). Y128 is a catalytic residue.

It belongs to the oligoribonuclease family.

It localises to the cytoplasm. Functionally, 3'-to-5' exoribonuclease specific for small oligoribonucleotides. This Pseudomonas syringae pv. tomato (strain ATCC BAA-871 / DC3000) protein is Oligoribonuclease.